The sequence spans 167 residues: MKERLPHEKGFHVSWDQIHRDSRALAWRLDGQGPDNGAWRAVVGITRGGLVPAMIVSRELDIRTVDTISVKSYNWQEQQPPSVIKAPQAELMGDGHGILIVDDLVDSGKTLELVRTLYPRAHFATVYAKPSGRPMVDTYITEVSQDTWIFFPWDMALQYVEPYRGRD.

Residues 47–48, Gln79, and 102–110 contribute to the 5-phospho-alpha-D-ribose 1-diphosphate site; these read RG and DDLVDSGKT. Gln79 lines the GMP pocket. Asp103 provides a ligand contact to Mg(2+). 2 residues coordinate guanine: Asp106 and Ile149. Residues Asp106 and Ile149 each contribute to the xanthine site. Residues 106 to 110 and 148 to 149 each bind GMP; these read DSGKT and WI.

This sequence belongs to the purine/pyrimidine phosphoribosyltransferase family. XGPT subfamily. Homotetramer. The cofactor is Mg(2+).

The protein resides in the cell inner membrane. It catalyses the reaction GMP + diphosphate = guanine + 5-phospho-alpha-D-ribose 1-diphosphate. It carries out the reaction XMP + diphosphate = xanthine + 5-phospho-alpha-D-ribose 1-diphosphate. The catalysed reaction is IMP + diphosphate = hypoxanthine + 5-phospho-alpha-D-ribose 1-diphosphate. It participates in purine metabolism; GMP biosynthesis via salvage pathway; GMP from guanine: step 1/1. It functions in the pathway purine metabolism; XMP biosynthesis via salvage pathway; XMP from xanthine: step 1/1. Its function is as follows. Purine salvage pathway enzyme that catalyzes the transfer of the ribosyl-5-phosphate group from 5-phospho-alpha-D-ribose 1-diphosphate (PRPP) to the N9 position of the 6-oxopurines guanine and xanthine to form the corresponding ribonucleotides GMP (guanosine 5'-monophosphate) and XMP (xanthosine 5'-monophosphate), with the release of PPi. To a lesser extent, also acts on hypoxanthine. The chain is Xanthine-guanine phosphoribosyltransferase from Cereibacter sphaeroides (strain ATCC 17025 / ATH 2.4.3) (Rhodobacter sphaeroides).